The following is a 49-amino-acid chain: Disintegrin eristostatin (49 aa).

The region spanning 1–49 (QEEPCATGPCCRRCKFKRAGKVCRVARGDWNDDYCTGKSCDCPKNPWNG) is the Disintegrin domain. 4 disulfide bridges follow: cysteine 5/cysteine 14, cysteine 10/cysteine 35, cysteine 11/cysteine 40, and cysteine 23/cysteine 42. Positions 27–29 (RGD) match the Cell attachment site motif.

It belongs to the venom metalloproteinase (M12B) family. P-II subfamily. P-IIa sub-subfamily. Monomer. In terms of tissue distribution, expressed by the venom gland.

The protein resides in the secreted. Its function is as follows. Is a potent inhibitor of ADP-induced platelet aggregation. Acts by binding to alpha-IIb/beta-3 (ITGA2B/ITGB3) receptor on the platelet surface. Binds with the same high affinity to resting and activated platelets. Also binds the alpha-4/beta-1 (ITGA4/ITGB1) integrin. Is a potent inhibitor of human and murine melanoma metastases in mouse model systems, also due to the inhibition of binding between the alpha-4/beta-1 integrin and the vascular cell adhesion protein VCAM1. Reacts neither with the integrin alpha-V/beta-3 (ITGAV/ITGB3) vitronectin receptor nor with the integrin alpha-5/beta-1 (ITGA5/ITGB1) fibronectin receptor. Has no effect on cell proliferation or angiogenesis. Specifically inhibits cell migration on fibronectin, but not that on collagen IV or laminin. May involve fibronectin-binding integrins that mediate cell migration. In Eristicophis macmahoni (Leaf-nosed viper), this protein is Disintegrin eristostatin.